A 536-amino-acid chain; its full sequence is Heparanase (536 aa).

Residues 1-28 form the signal peptide; the sequence is MLRPLLLLWLWGRLGALTQGTPAGTAPT. Residues 55–57 and Thr-90 contribute to the heparan sulfate group site; that span reads DAS. Residues 103-150 constitute a propeptide, linker peptide; that stretch reads PTSEERSYWQSQDNNDICGSERVSADVLRKLQMEWPFQELLLLREQYQ. An intrachain disulfide couples Cys-120 to Cys-172. 151–155 is a heparan sulfate group binding site; it reads REFKN. Asn-155, Asn-193, and Asn-210 each carry an N-linked (GlcNAc...) asparagine glycan. The active-site Proton donor is Glu-218. Residues 263–273, His-289, and Arg-296 contribute to the heparan sulfate group site; that span reads QPRGKTVKLLR. The segment at 281 to 410 is required for heterodimerization with the heparanase 8 kDa subunit; it reads EVIDSLTWHH…LLFKKLVGPK (130 aa). Glu-336 acts as the Nucleophile in catalysis. Residues 341-343 and 382-384 contribute to the heparan sulfate group site; these read YGG and GNY. Cys-430 and Cys-535 are oxidised to a cystine. An N-linked (GlcNAc...) asparagine glycan is attached at Asn-452. The required for transferring proheparanase to the Golgi apparatus, secretion and subsequent enzyme activity and for enhancement of PKB/AKT1 phosphorylation stretch occupies residues 520–536; that stretch reads FSYGFFVIRNAKIAACI.

This sequence belongs to the glycosyl hydrolase 79 family. As to quaternary structure, heterodimer; heterodimer formation between the 8 kDa and the 50 kDa subunits is required for enzyme activity. Interacts with TF; the interaction, inhibited by heparin, enhances the generation of activated factor X and activates coagulation. Interacts with HRG; the interaction is enhanced at acidic pH, partially inhibits binding of HPSE to cell surface receptors and modulates its enzymatic activity. Interacts with SDC1; the interaction enhances the shedding of SDC1. Interacts with HPSE2. In terms of processing, proteolytically processed. The cleavage of the 65 kDa form leads to the generation of a linker peptide, and the 8 kDa and 50 kDa products. The active form, the 8/50 kDa heterodimer, is resistant to degradation. Complete removal of the linker peptide appears to be a prerequisite to the complete activation of the enzyme. Post-translationally, N-glycosylated. Glycosylation of the 50 kDa subunit appears to be essential for its solubility.

Its subcellular location is the lysosome membrane. The protein resides in the secreted. The protein localises to the nucleus. The catalysed reaction is endohydrolysis of (1-&gt;4)-beta-D-glycosidic bonds of heparan sulfate chains in heparan sulfate proteoglycan.. Inhibited by laminarin sulfate and, to a lower extent, by heparin and sulfamin. Activated by calcium and magnesium. Inhibited by EDTA. Its function is as follows. Endoglycosidase that cleaves heparan sulfate proteoglycans (HSPGs) into heparan sulfate side chains and core proteoglycans. Participates in extracellular matrix (ECM) degradation and remodeling. Selectively cleaves the linkage between a glucuronic acid unit and an N-sulfo glucosamine unit carrying either a 3-O-sulfo or a 6-O-sulfo group. Can also cleave the linkage between a glucuronic acid unit and an N-sulfo glucosamine unit carrying a 2-O-sulfo group, but not linkages between a glucuronic acid unit and a 2-O-sulfated iduronic acid moiety. It is essentially inactive at neutral pH but becomes active under acidic conditions such as during tumor invasion and in inflammatory processes. Facilitates cell migration associated with metastasis, wound healing and inflammation. Enhances shedding of syndecans, and increases endothelial invasion and angiogenesis in myelomas. Acts as a procoagulant by increasing the generation of activation factor X in the presence of tissue factor and activation factor VII. Increases cell adhesion to the extracellular matrix (ECM), independent of its enzymatic activity. Induces AKT1/PKB phosphorylation via lipid rafts increasing cell mobility and invasion. Heparin increases this AKT1/PKB activation. Regulates osteogenesis. Enhances angiogenesis through up-regulation of SRC-mediated activation of VEGF. Implicated in hair follicle inner root sheath differentiation and hair homeostasis. This is Heparanase (Hpse) from Rattus norvegicus (Rat).